The following is a 274-amino-acid chain: Transmembrane O-methyltransferase (274 aa).

The helical transmembrane segment at 14–34 (VGTMSPAIALAFLPLVVTLLV) threads the bilayer. Residues Glu-120, 122 to 123 (GT), Ser-128, Glu-146, and Ser-176 contribute to the S-adenosyl-L-methionine site.

Belongs to the class I-like SAM-binding methyltransferase superfamily. Cation-dependent O-methyltransferase family. As to quaternary structure, interacts with LHFPL5, PCDH15, TMC1, TMC2 and TMIE. Interacts directly with TMC1. The interaction of TOMT with TMC1 and TMC2 is required for the transportation of TMC1/2 into the stereocilia of hair cells.

The protein localises to the membrane. It localises to the cytoplasm. It is found in the endoplasmic reticulum. It catalyses the reaction a catechol + S-adenosyl-L-methionine = a guaiacol + S-adenosyl-L-homocysteine + H(+). Its function is as follows. Catalyzes the O-methylation, and thereby the inactivation, of catecholamine neurotransmitters and catechol hormones. Required for auditory function. Component of the cochlear hair cell's mechanotransduction (MET) machinery. Involved in the assembly of the asymmetric tip-link MET complex. Required for transportation of TMC1 and TMC2 proteins into the mechanically sensitive stereocilia of the hair cells. The function in MET is independent of the enzymatic activity. The protein is Transmembrane O-methyltransferase of Propithecus coquereli (Coquerel's sifaka).